A 298-amino-acid polypeptide reads, in one-letter code: Urease accessory protein UreD 3 (298 aa).

Residues 1–30 form a disordered region; the sequence is MADEAGTRSAGGRPIPAAEPLRPALSRQRS.

The protein belongs to the UreD family. As to quaternary structure, ureD, UreF and UreG form a complex that acts as a GTP-hydrolysis-dependent molecular chaperone, activating the urease apoprotein by helping to assemble the nickel containing metallocenter of UreC. The UreE protein probably delivers the nickel.

It localises to the cytoplasm. Required for maturation of urease via the functional incorporation of the urease nickel metallocenter. This is Urease accessory protein UreD 3 from Methylorubrum extorquens (strain PA1) (Methylobacterium extorquens).